Here is a 361-residue protein sequence, read N- to C-terminus: 4-hydroxytryptamine kinase (361 aa).

ATP-binding positions include Asn37, Lys57, and 118-120 (QDV). The active site involves Asp224. ATP is bound at residue 248–250 (DWE).

Belongs to the methylthioribose kinase family. As to quaternary structure, monomer. Requires Mg(2+) as cofactor.

The enzyme catalyses 4-hydroxytryptamine + ATP = norbaeocystin + ADP + H(+). It catalyses the reaction psilocin + ATP = psilocybin + ADP + H(+). The catalysed reaction is 4-hydroxy-N,N,N-trimethyltryptamine + ATP = aeruginascin + ADP + H(+). It participates in secondary metabolite biosynthesis. In terms of biological role, 4-hydroxytryptamine kinase; part of the gene cluster that mediates the biosynthesis of psilocybin, a psychotropic tryptamine-derived natural product. The first step in the pathway is the decarboxylation of L-tryptophan to tryptamine by the decarboxylase psiD. PsiD does not decarboxylate phenylalanine, tyrosine, or 5-hydroxy- L -tryptophan (5-HTP). 4-hydroxy-L-tryptophan is accepted as substrate by psiD as well. The cytochrome P450 monooxygenase psiH then converts tryptamine to 4-hydroxytryptamine. The kinase psiK catalyzes the 4-O-phosphorylation step by converting 4-hydroxytryptamine into norbaeocystin. The methyltransferase psiM then catalyzes iterative methyl transfer to the amino group of norbaeocystin to yield psilocybin via a monomethylated intermediate, baeocystin. 4-hydroxy-6-methyl-l-tryptophancan also be converted the decarboxylase PsiD, kinase PsiK, and methyltransferase PsiM into respectively 6-methyl-norbaeocystin, 6-methylbaeocystin, and 6-methylpsilocybin. PsiK kinase can also turn psilocin into psilocybin. This activity may represent a protective mechanism to rephosphorylate the unstable psilocin to the stable psilocybin in case of intracellular ester cleavage. Moreover, psiK is able to O-phosphorylate the quaternary amine 4-hydroxy-N,N,N-trimethyltryptamine (4-OH-TMT) to yield aeruginascin, another bioactive compound found in Psilocybe species. This is 4-hydroxytryptamine kinase from Psilocybe cyanescens.